Reading from the N-terminus, the 124-residue chain is Small ribosomal subunit protein uS12 (124 aa).

Aspartate 89 carries the post-translational modification 3-methylthioaspartic acid.

It belongs to the universal ribosomal protein uS12 family. In terms of assembly, part of the 30S ribosomal subunit. Contacts proteins S8 and S17. May interact with IF1 in the 30S initiation complex.

Its function is as follows. With S4 and S5 plays an important role in translational accuracy. In terms of biological role, interacts with and stabilizes bases of the 16S rRNA that are involved in tRNA selection in the A site and with the mRNA backbone. Located at the interface of the 30S and 50S subunits, it traverses the body of the 30S subunit contacting proteins on the other side and probably holding the rRNA structure together. The combined cluster of proteins S8, S12 and S17 appears to hold together the shoulder and platform of the 30S subunit. This is Small ribosomal subunit protein uS12 from Yersinia pestis (strain Pestoides F).